A 776-amino-acid polypeptide reads, in one-letter code: Angiomotin-like protein 2 (776 aa).

The tract at residues 41 to 88 is disordered; sequence GGAGAGGTGSPQASAEILAPEDTQVLQQATRQEPQGQEHQGGESHLAE. Positions 101–307 are required for interaction with CDH5; it reads GEELPTYEEA…STQTSSAPSG (207 aa). Tyr107 carries the phosphotyrosine modification. 3 disordered regions span residues 119-142, 169-215, and 283-309; these read AQQA…GHRS, RNGA…QYPH, and GPLG…SGSA. Polar residues predominate over residues 177–192; the sequence is HMSSSHSFPQLARNQQ. The segment covering 196–213 has biased composition (pro residues); it reads PRGPPAEGPEPRGPPPQY. The tract at residues 220–307 is required for interaction with CDH1; sequence HETATAVTDP…STQTSSAPSG (88 aa). Residues 297–306 show a composition bias toward polar residues; it reads ASTQTSSAPS. Coiled-coil stretches lie at residues 314–509 and 543–570; these read METL…LELR and ALRL…WEQK. Residues Lys347 and Lys408 each participate in a glycyl lysine isopeptide (Lys-Gly) (interchain with G-Cter in ubiquitin) cross-link. Disordered regions lie at residues 591–620 and 677–743; these read QRDT…GHRH and TQGW…LDPD. Positions 678 to 687 are enriched in polar residues; it reads QGWQSLSSSE. Residues Ser756 and Ser759 each carry the phosphoserine modification. A PDZ-binding motif is present at residues 773–776; sequence EILI.

The protein belongs to the angiomotin family. Part of a complex composed of AMOTL2, MAGI1 and CDH5, within the complex AMOTL2 acts as a scaffold protein for the interaction of MAGI1 with CDH5. The complex is required for coupling actin fibers to cell junctions in endothelial cells. Within the complex AMOTL2 (via its N-terminus) interacts with CDH5. Interacts (via N-terminus) with MAGI1. Interacts (via N-terminus) with ACTB; the interaction facilitates binding of cell junction complexes to actin fibers in endothelial cells. Interacts with CDH1; the interaction may facilitate binding of radial actin fibers to cell junction complexes. Interacts with SRC. Interacts with YAP1; the interaction is required for ubiquitination of AMOTL2 and localization of YAP1 to tight junctions. Interacts with WWP1; the interaction facilitates WWP1 interaction with the Crumbs complex and subsequent WWP1 translocation to the plasma membrane. WPP1 interaction with the Crumbs complex promotes WPP1 monoubiquitination of AMOTL2 which subsequently activates the Hippo signaling pathway. When ubiquitinated interacts with LATS2 (via UBA domain); the interaction promotes LATS2 phosphorylation of YAP1. Interacts (via PPXY motif) with WWTR1/TAZ (via WW domain); the interaction promotes WWTR1/TAZ localization to the cytoplasm and thereby inhibition of its transcriptional properties. Interacts with PHLDB2; interaction may facilitate PHLDB2 localization to the myotube podosome cortex that surrounds the core. Post-translationally, monoubiquitinated at Lys-347 and Lys-408 by Crumbs complex-bound WWP1. De-ubiquitinated at Lys-347 and Lys-408 by USP9X; the interaction may be promoted by cell contact inhibition. Deubiquitination of AMOTL2 negatively regulates Hippo signaling activation. Phosphorylation at Tyr-107 is necessary for efficient binding to SRC and synergistically functioning with SRC to activate the downstream MAPK pathway.

The protein localises to the recycling endosome. It localises to the cytoplasm. It is found in the cell projection. The protein resides in the podosome. Its subcellular location is the cell junction. Functionally, regulates the translocation of phosphorylated SRC to peripheral cell-matrix adhesion sites. Required for proper architecture of actin filaments. Plays a role in coupling actin fibers to cell junctions in endothelial cells and is therefore required for correct endothelial cell morphology via facilitating transcellular transmission of mechanical force resulting in endothelial cell elongation. Required for the anchoring of radial actin fibers to CDH1 junction complexes at the cell membrane which facilitates organization of radial actin fiber structure and cellular response to contractile forces. This contributes to maintenance of cell area, size, shape, epithelial sheet organization and trophectoderm cell properties that facilitate blastocyst zona hatching. Inhibits the Wnt/beta-catenin signaling pathway, probably by recruiting CTNNB1 to recycling endosomes and hence preventing its translocation to the nucleus. Participates in angiogenesis. Activates the Hippo signaling pathway in response to cell contact inhibition via interaction with and ubiquitination by Crumbs complex-bound WWP1. Ubiquitinated AMOTL2 then interacts with LATS2 which in turn phosphorylates YAP1, excluding it from the nucleus and localizing it to the cytoplasm and tight junctions, therefore ultimately repressing YAP1-driven transcription of target genes. Acts to inhibit WWTR1/TAZ transcriptional coactivator activity via sequestering WWTR1/TAZ in the cytoplasm and at tight junctions. Regulates the size and protein composition of the podosome cortex and core at myofibril neuromuscular junctions. Selectively promotes FGF-induced MAPK activation through SRC. May play a role in the polarity, proliferation and migration of endothelial cells. The sequence is that of Angiomotin-like protein 2 from Canis lupus familiaris (Dog).